A 193-amino-acid polypeptide reads, in one-letter code: Superoxide dismutase [Fe] (193 aa).

Positions 27, 74, 157, and 161 each coordinate Fe cation.

Belongs to the iron/manganese superoxide dismutase family. In terms of assembly, homodimer. Fe cation serves as cofactor.

The enzyme catalyses 2 superoxide + 2 H(+) = H2O2 + O2. Functionally, destroys superoxide anion radicals which are normally produced within the cells and which are toxic to biological systems. The polypeptide is Superoxide dismutase [Fe] (sodB) (Coxiella burnetii (strain RSA 493 / Nine Mile phase I)).